We begin with the raw amino-acid sequence, 126 residues long: Large ribosomal subunit protein bL12 (126 aa).

This sequence belongs to the bacterial ribosomal protein bL12 family. Homodimer. Part of the ribosomal stalk of the 50S ribosomal subunit. Forms a multimeric L10(L12)X complex, where L10 forms an elongated spine to which 2 to 4 L12 dimers bind in a sequential fashion. Binds GTP-bound translation factors.

Forms part of the ribosomal stalk which helps the ribosome interact with GTP-bound translation factors. Is thus essential for accurate translation. This chain is Large ribosomal subunit protein bL12, found in Methylocella silvestris (strain DSM 15510 / CIP 108128 / LMG 27833 / NCIMB 13906 / BL2).